The primary structure comprises 393 residues: tRNA(Met) cytidine acetate ligase (393 aa).

3 residues coordinate ATP: G81, N142, and R167.

This sequence belongs to the TmcAL family.

The protein localises to the cytoplasm. The catalysed reaction is cytidine(34) in elongator tRNA(Met) + acetate + ATP = N(4)-acetylcytidine(34) in elongator tRNA(Met) + AMP + diphosphate. Catalyzes the formation of N(4)-acetylcytidine (ac(4)C) at the wobble position of elongator tRNA(Met), using acetate and ATP as substrates. First activates an acetate ion to form acetyladenylate (Ac-AMP) and then transfers the acetyl group to tRNA to form ac(4)C34. This chain is tRNA(Met) cytidine acetate ligase, found in Bacillus anthracis (strain A0248).